Here is a 445-residue protein sequence, read N- to C-terminus: Sodium/proton-dependent alanine carrier protein (445 aa).

Helical transmembrane passes span 41-61 (IAYG…IGAA), 103-123 (AAII…SIAD), 129-149 (FGIP…FTIF), 159-179 (AEIV…AIIA), 188-208 (VFGL…GILG), 249-269 (AFSI…MILF), 304-324 (TLFP…FAFT), 349-369 (AFFA…VKTA), and 375-395 (MGDI…LLLF).

This sequence belongs to the alanine or glycine:cation symporter (AGCS) (TC 2.A.25) family. Post-translationally, the N-terminus is blocked.

Its subcellular location is the cell membrane. Functionally, mediates the active transport of alanine, driven by either an H(+) or Na(+) gradient. This chain is Sodium/proton-dependent alanine carrier protein, found in Bacillus sp. (strain PS3).